The chain runs to 847 residues: KN motif and ankyrin repeat domain-containing protein 2 (847 aa).

A disordered region spans residues 1-32 (MAQVLHVPAPFPGTPGQASSAAFPNKEPDPPY). The segment at 1-72 (MAQVLHVPAP…PVQRRPRLGS (72 aa)) is interaction with AIFM1. Residues serine 19, serine 83, serine 86, serine 89, and serine 92 each carry the phosphoserine modification. Arginine 105 is subject to Omega-N-methylarginine. The disordered stretch occupies residues 161–182 (LAGVGLLPPTPRSSGLSTPVAP). A Phosphothreonine modification is found at threonine 170. Coiled coils occupy residues 187-207 (LAHV…LEEQ) and 284-311 (EAAL…AQTQ). At threonine 331 the chain carries Phosphothreonine. Serine 358 carries the post-translational modification Phosphoserine. 2 disordered regions span residues 414–473 (GAAR…GGAS) and 502–581 (NGGY…PEEE). Residues 420 to 433 (DPPPSPAEPSPSSP) show a composition bias toward pro residues. Composition is skewed to low complexity over residues 434-446 (YPAA…APAA) and 506-516 (ESSSEDSSTAE). At serine 536 the chain carries Phosphoserine. Residues 610–647 (RELKVAYTTVLQEWLRLACRSDAHPELVRRHLVTFRAM) form an ANK 0; degenerate repeat. 5 ANK repeats span residues 662–692 (NGNT…QVDK), 696–729 (AGYS…NVNA), 734–763 (AGQT…DVNM), 767–797 (DGST…DISL), and 801–831 (DGST…KCSF). An interaction with NCOA1 region spans residues 665-831 (TALHYSVSHA…YSRMNIKCSF (167 aa)).

As to quaternary structure, interacts (non-phosphorylated form) with NCOA1; NCOA2 AND NCOA3. Interacts with AIFM1. Interacts with ARHGDIA; the interaction is direct and may regulate the interaction of ARHGDIA with RHOA, RAC1 and CDC42. Interacts (via ANK repeats 1-5) with KIF21A. Post-translationally, phosphorylated by casein kinase II upon estrogen stimulation. Phosphorylation induces the release by KANK2 of NCOA1 and its translocation to the nucleus where NCOA1 can activate gene transcription. In terms of tissue distribution, expressed by podocytes in kidney glomeruli (at protein level).

It is found in the cytoplasm. Its subcellular location is the mitochondrion. Its function is as follows. Involved in transcription regulation by sequestering in the cytoplasm nuclear receptor coactivators such as NCOA1, NCOA2 and NCOA3. Involved in regulation of caspase-independent apoptosis by sequestering the proapoptotic factor AIFM1 in mitochondria. Pro-apoptotic stimuli can induce its proteasomal degradation allowing the translocation of AIFM1 to the nucleus to induce apoptosis. Involved in the negative control of vitamin D receptor signaling pathway. Involved in actin stress fibers formation through its interaction with ARHGDIA and the regulation of the Rho signaling pathway. May thereby play a role in cell adhesion and migration, regulating for instance podocytes migration during development of the kidney. Through the Rho signaling pathway may also regulate cell proliferation. The chain is KN motif and ankyrin repeat domain-containing protein 2 from Rattus norvegicus (Rat).